Consider the following 202-residue polypeptide: Ras-related protein ORAB-1 (202 aa).

GTP is bound by residues Gly-15–Cys-23, Tyr-33–Thr-40, Asp-63–Gln-67, Asn-121–Asp-124, and Ser-151–Lys-153. The Effector region motif lies at Tyr-37 to Phe-45. The segment at Met-173–Cys-202 is disordered. The segment covering Gly-180 to Lys-195 has biased composition (polar residues). Residues Cys-201 and Cys-202 are each lipidated (S-geranylgeranyl cysteine).

Belongs to the small GTPase superfamily. Rab family.

The protein localises to the cell membrane. Protein transport. Probably involved in vesicular traffic. This Diplobatis ommata (Ocellated electric ray) protein is Ras-related protein ORAB-1.